Reading from the N-terminus, the 181-residue chain is ATP-dependent protease subunit HslV (181 aa).

The active site involves Thr9. The Na(+) site is built by Gly164, Cys167, and Thr170.

Belongs to the peptidase T1B family. HslV subfamily. A double ring-shaped homohexamer of HslV is capped on each side by a ring-shaped HslU homohexamer. The assembly of the HslU/HslV complex is dependent on binding of ATP.

It is found in the cytoplasm. It carries out the reaction ATP-dependent cleavage of peptide bonds with broad specificity.. Allosterically activated by HslU binding. In terms of biological role, protease subunit of a proteasome-like degradation complex believed to be a general protein degrading machinery. The chain is ATP-dependent protease subunit HslV from Gemmatimonas aurantiaca (strain DSM 14586 / JCM 11422 / NBRC 100505 / T-27).